The sequence spans 484 residues: Probable endopeptidase p60 (484 aa).

The N-terminal stretch at 1-27 (MNMKKATIAATAGIAVTAFAAPTIASA) is a signal peptide. The region spanning 28-71 (STVVVEAGDTLWGIAQSKGTTVDAIKKANNLTTDKIVPGQKLQV) is the LysM 1 domain. Residues 80–144 (KTEKSVSATW…VNGKYLTDKA (65 aa)) form the SH3b domain. Residues 150 to 192 (APTQEVKKETTTQQAAPAAETKTEVKQTTQATTPAPKVAETKE) are disordered. Residues 160–169 (TTQQAAPAAE) show a composition bias toward low complexity. The LysM 2 domain maps to 201-244 (TTHAVKSGDTIWALSVKYGVSVQDIMSWNNLSSSSIYVGQKLAI). Residues 254–367 (KAEVKTEAPA…QGSSNNNSNS (114 aa)) are disordered. Composition is skewed to low complexity over residues 273-282 (KENTNTNTAT) and 289-367 (ATQQ…NSNS). The interval 311–355 (TNTNANKTNTNTNTNTNTNNTNTNTPSKNTNTNSNTNTNTNSNTN) is 19 X 2 AA tandem repeats of T-N. Positions 366-484 (NSSASAIIAE…GKYLVGFGRV (119 aa)) constitute a NlpC/P60 domain. The active-site Nucleophile is the Cys396. His446 acts as the Proton acceptor in catalysis. Asn458 is a catalytic residue.

Belongs to the peptidase C40 family.

It localises to the cell surface. It is found in the secreted. Its function is as follows. This major extracellular protein may be involved in the invasion of non-professional phagocytic cells by Listeria. In Listeria monocytogenes serovar 1/2a (strain ATCC BAA-679 / EGD-e), this protein is Probable endopeptidase p60 (iap).